The primary structure comprises 269 residues: Surfeit locus protein 4 (269 aa).

6 consecutive transmembrane segments (helical) span residues 64–84 (FLAS…CILV), 92–112 (YACF…SILW), 157–177 (MQLG…HFDM), 179–199 (FFYI…AIGF), 203–223 (LAAL…NAFW), and 242–262 (TMSV…GVSM). The short motif at 266-269 (KKEW) is the Di-lysine motif element.

This sequence belongs to the SURF4 family.

The protein resides in the endoplasmic reticulum membrane. It is found in the endoplasmic reticulum-Golgi intermediate compartment membrane. It localises to the golgi apparatus membrane. Functionally, endoplasmic reticulum cargo receptor that mediates the export of lipoproteins by recruiting cargos into COPII vesicles to facilitate their secretion. Acts as a cargo receptor for lipoproteins bearing both APOB and APOA1, thereby regulating lipoprotein delivery and the maintenance of lipid homeostasis. This Gallus gallus (Chicken) protein is Surfeit locus protein 4.